The chain runs to 49 residues: Large ribosomal subunit protein bL33B (49 aa).

The protein belongs to the bacterial ribosomal protein bL33 family.

The sequence is that of Large ribosomal subunit protein bL33B (rpmG2) from Lactococcus lactis subsp. cremoris (Streptococcus cremoris).